A 297-amino-acid chain; its full sequence is Tyrosine recombinase XerD (297 aa).

The Core-binding (CB) domain maps to 1 to 86 (MNDLIEDFLH…SLRSFFHYLM (86 aa)). Residues 107–291 (GLPKVLNLDD…TKLRLKDVYK (185 aa)) enclose the Tyr recombinase domain. Active-site residues include Arg-147, Lys-171, His-243, Arg-246, and His-269. Catalysis depends on Tyr-278, which acts as the O-(3'-phospho-DNA)-tyrosine intermediate.

Belongs to the 'phage' integrase family. XerD subfamily. As to quaternary structure, forms a cyclic heterotetrameric complex composed of two molecules of XerC and two molecules of XerD.

The protein localises to the cytoplasm. In terms of biological role, site-specific tyrosine recombinase, which acts by catalyzing the cutting and rejoining of the recombining DNA molecules. The XerC-XerD complex is essential to convert dimers of the bacterial chromosome into monomers to permit their segregation at cell division. It also contributes to the segregational stability of plasmids. In Listeria monocytogenes serotype 4b (strain F2365), this protein is Tyrosine recombinase XerD.